A 335-amino-acid chain; its full sequence is MRIALDAMGGDHAPGEIVKGAIEAAEELHLQILLVGRPDAIEPLLKEASAGARSRLDIVAASEVIAMDESPATALRKKKDASIVVATRLVKEGRAQALVSAGSTGAQMAASLLGLGRISGIDRPAIATILPTLEGGKLLLDVGANSEAKPRNLLQFAHMGSIYAEKVMGIANPRVALLNIGEEETKGNELVLGAYGMLREAPLHFIGNVEGRDIFFGRADVIVCDGFVGNVVLKFGEGMVSALKTMIKDELKNSRMAQLGALLAAPALRGMGKRLDYAEYGGAPLLGVNGVSIICHGSSKAKAIKNALRVARQGVQQNFIAAIQEHIPGKVEPVC.

Belongs to the PlsX family. Homodimer. Probably interacts with PlsY.

It is found in the cytoplasm. It catalyses the reaction a fatty acyl-[ACP] + phosphate = an acyl phosphate + holo-[ACP]. It functions in the pathway lipid metabolism; phospholipid metabolism. In terms of biological role, catalyzes the reversible formation of acyl-phosphate (acyl-PO(4)) from acyl-[acyl-carrier-protein] (acyl-ACP). This enzyme utilizes acyl-ACP as fatty acyl donor, but not acyl-CoA. The chain is Phosphate acyltransferase from Heliobacterium modesticaldum (strain ATCC 51547 / Ice1).